Here is a 274-residue protein sequence, read N- to C-terminus: F-actin-capping protein subunit alpha (274 aa).

The protein belongs to the F-actin-capping protein alpha subunit family. As to quaternary structure, heterodimer of an alpha and a beta subunit.

Its subcellular location is the cytoplasm. Functionally, F-actin-capping proteins bind in a Ca(2+)-independent manner to the fast growing ends of actin filaments (barbed end) thereby blocking the exchange of subunits at these ends. Unlike other capping proteins (such as gelsolin and severin), these proteins do not sever actin filaments. The polypeptide is F-actin-capping protein subunit alpha (Chaetomium thermophilum (strain DSM 1495 / CBS 144.50 / IMI 039719) (Thermochaetoides thermophila)).